Consider the following 360-residue polypeptide: Phospho-N-acetylmuramoyl-pentapeptide-transferase (360 aa).

Transmembrane regions (helical) follow at residues 27–47 (GALI…INSL), 71–91 (TPTM…LLWA), 93–113 (LSSI…SIGF), 134–154 (LGLE…NGQA), 168–188 (FIIN…VGAG), 199–219 (GLAI…AYLS), 239–259 (LAVV…FNAP), 262–282 (AIFM…TVAV), 288–308 (IVLV…IIQV), and 337–357 (QVVI…LSTL).

This sequence belongs to the glycosyltransferase 4 family. MraY subfamily. Mg(2+) serves as cofactor.

It localises to the cell inner membrane. It catalyses the reaction UDP-N-acetyl-alpha-D-muramoyl-L-alanyl-gamma-D-glutamyl-meso-2,6-diaminopimeloyl-D-alanyl-D-alanine + di-trans,octa-cis-undecaprenyl phosphate = di-trans,octa-cis-undecaprenyl diphospho-N-acetyl-alpha-D-muramoyl-L-alanyl-D-glutamyl-meso-2,6-diaminopimeloyl-D-alanyl-D-alanine + UMP. The protein operates within cell wall biogenesis; peptidoglycan biosynthesis. Catalyzes the initial step of the lipid cycle reactions in the biosynthesis of the cell wall peptidoglycan: transfers peptidoglycan precursor phospho-MurNAc-pentapeptide from UDP-MurNAc-pentapeptide onto the lipid carrier undecaprenyl phosphate, yielding undecaprenyl-pyrophosphoryl-MurNAc-pentapeptide, known as lipid I. The protein is Phospho-N-acetylmuramoyl-pentapeptide-transferase of Mesorhizobium japonicum (strain LMG 29417 / CECT 9101 / MAFF 303099) (Mesorhizobium loti (strain MAFF 303099)).